Consider the following 206-residue polypeptide: Flavin prenyltransferase UbiX (206 aa).

FMN contacts are provided by residues 14–16 (GAS), threonine 40, 101–104 (SMGT), and arginine 136. 2 residues coordinate dimethylallyl phosphate: tyrosine 166 and lysine 182.

It belongs to the UbiX/PAD1 family.

The enzyme catalyses dimethylallyl phosphate + FMNH2 = prenylated FMNH2 + phosphate. Functionally, flavin prenyltransferase that catalyzes the synthesis of the prenylated FMN cofactor (prenyl-FMN) for 4-hydroxy-3-polyprenylbenzoic acid decarboxylase UbiD. The prenyltransferase is metal-independent and links a dimethylallyl moiety from dimethylallyl monophosphate (DMAP) to the flavin N5 and C6 atoms of FMN. The sequence is that of Flavin prenyltransferase UbiX from Halalkalibacterium halodurans (strain ATCC BAA-125 / DSM 18197 / FERM 7344 / JCM 9153 / C-125) (Bacillus halodurans).